The following is a 501-amino-acid chain: GDP-fucose protein O-fucosyltransferase 4 (501 aa).

Over 1-10 the chain is Cytoplasmic; the sequence is MLLQMAGRGK. A helical; Signal-anchor for type II membrane protein transmembrane segment spans residues 11 to 31; it reads MVPCVCLGLLGVLCWVWVSFA. Residues 32 to 501 are Lumenal-facing; that stretch reads SFPDEQLSLG…MAVRRARGKN (470 aa). Asn173 carries N-linked (GlcNAc...) asparagine glycosylation. A disulfide bridge connects residues Cys396 and Cys399. N-linked (GlcNAc...) asparagine glycosylation is found at Asn428 and Asn478.

This sequence belongs to the glycosyltransferase 10 family.

It is found in the endoplasmic reticulum membrane. It carries out the reaction L-threonyl-[protein] + GDP-beta-L-fucose = 3-O-(alpha-L-fucosyl)-L-threonyl-[protein] + GDP + H(+). It catalyses the reaction L-seryl-[protein] + GDP-beta-L-fucose = 3-O-(alpha-L-fucosyl)-L-seryl-[protein] + GDP + H(+). Its pathway is protein modification; protein glycosylation. Functionally, protein O-fucosyltransferase that specifically catalyzes O-fucosylation of serine or threonine residues in EMI domains of target proteins. Attaches fucose through an O-glycosidic linkage. O-fucosylation of EMI domain-containing proteins may be required for facilitating protein folding and secretion. The chain is GDP-fucose protein O-fucosyltransferase 4 (fut11) from Takifugu rubripes (Japanese pufferfish).